The sequence spans 214 residues: Probable nicotinate-nucleotide adenylyltransferase (214 aa).

The protein belongs to the NadD family.

It catalyses the reaction nicotinate beta-D-ribonucleotide + ATP + H(+) = deamido-NAD(+) + diphosphate. It functions in the pathway cofactor biosynthesis; NAD(+) biosynthesis; deamido-NAD(+) from nicotinate D-ribonucleotide: step 1/1. Catalyzes the reversible adenylation of nicotinate mononucleotide (NaMN) to nicotinic acid adenine dinucleotide (NaAD). This is Probable nicotinate-nucleotide adenylyltransferase from Pseudomonas aeruginosa (strain UCBPP-PA14).